A 282-amino-acid polypeptide reads, in one-letter code: Nicotianamine synthase-like 5 protein (282 aa).

It belongs to the nicotianamine synthase (NAS)-like family.

The protein is Nicotianamine synthase-like 5 protein (NAS5) of Hordeum vulgare (Barley).